The following is a 285-amino-acid chain: Short chain dehydrogenase sol3 (285 aa).

Residues leucine 39, lysine 64, and aspartate 87 each contribute to the NADP(+) site. Catalysis depends on proton donor residues serine 168 and tyrosine 200. Residues tyrosine 200, lysine 204, and serine 234 each contribute to the NADP(+) site. Lysine 204 functions as the Lowers pKa of active site Tyr in the catalytic mechanism.

Belongs to the short-chain dehydrogenases/reductases (SDR) family.

It functions in the pathway phytotoxin biosynthesis. In terms of biological role, short chain dehydrogenase; part of the gene cluster that mediates the biosynthesis of the phytotoxin solanapyrone, a causal agent of early blight disease of potato and tomato. The prosolanapyrone synthase sol1 is a polyketide synthase that produces the octaketide desmethylprosolanapyrone I via sequential condensations of 7 malonyl-CoA units with one acetyl-CoA unit, and one methylation step. The octaketide backbone is further methylated by the sol2 O-methyltransferase to yield prosolanapyrone I. Prosolanapyrone I is hydroxylated to prosolanapyrone II by the cytochrome P450 monooxygenase sol6. The solanapyrone synthase sol5 then catalyzes the oxidation of prosolanapyrone II and the subsequent Diels Alder cycloisomerization of the product prosolanapyrone III to solanapyrones A and D. Solanapyrones A and D are then converted into solanapyrones B and E, respectively, by the sol3 dehydrogenase. This Alternaria solani protein is Short chain dehydrogenase sol3 (sol3).